A 279-amino-acid polypeptide reads, in one-letter code: Urease accessory protein UreD (279 aa).

The protein belongs to the UreD family. As to quaternary structure, ureD, UreF and UreG form a complex that acts as a GTP-hydrolysis-dependent molecular chaperone, activating the urease apoprotein by helping to assemble the nickel containing metallocenter of UreC. The UreE protein probably delivers the nickel.

Its subcellular location is the cytoplasm. Functionally, required for maturation of urease via the functional incorporation of the urease nickel metallocenter. This chain is Urease accessory protein UreD, found in Pseudomonas fluorescens (strain Pf0-1).